Consider the following 125-residue polypeptide: Small ribosomal subunit protein uS12m (125 aa).

Residues 1–27 (MPTKNQLIRHGREEKRRTDRTRALDQC) form a disordered region. A compositionally biased stretch (basic and acidic residues) spans 10–23 (HGREEKRRTDRTRA).

This sequence belongs to the universal ribosomal protein uS12 family.

Its subcellular location is the mitochondrion. Its function is as follows. Protein S12 is involved in the translation initiation step. This chain is Small ribosomal subunit protein uS12m (RPS12), found in Triticum aestivum (Wheat).